A 277-amino-acid polypeptide reads, in one-letter code: Inositol monophosphatase 1 (277 aa).

Residues Glu70, Asp90, Ile92, and Asp93 each contribute to the Mg(2+) site. Residues Glu70, 90–95 (DPIDGT), 194–196 (GTA), Glu213, and Asp220 contribute to the substrate site. Asp220 lines the Mg(2+) pocket.

It belongs to the inositol monophosphatase superfamily. As to quaternary structure, homodimer. The cofactor is Mg(2+). Mostly expressed in brain, small intestine, testis, kidney, and spleen (at protein level).

The protein localises to the cytoplasm. The catalysed reaction is a myo-inositol phosphate + H2O = myo-inositol + phosphate. The enzyme catalyses 1D-myo-inositol 1-phosphate + H2O = myo-inositol + phosphate. It carries out the reaction 1D-myo-inositol 2-phosphate + H2O = myo-inositol + phosphate. It catalyses the reaction 1D-myo-inositol 3-phosphate + H2O = myo-inositol + phosphate. The catalysed reaction is 1D-myo-inositol 4-phosphate + H2O = myo-inositol + phosphate. The enzyme catalyses 1D-myo-inositol 5-phosphate + H2O = myo-inositol + phosphate. It carries out the reaction 1D-myo-inositol 6-phosphate + H2O = myo-inositol + phosphate. It catalyses the reaction scyllo-inositol 1-phosphate + H2O = scyllo-inositol + phosphate. The catalysed reaction is alpha-D-galactose 1-phosphate + H2O = D-galactose + phosphate. The enzyme catalyses alpha-D-glucose 1-phosphate + H2O = D-glucose + phosphate. It carries out the reaction D-glucose 6-phosphate + H2O = D-glucose + phosphate. It catalyses the reaction beta-D-fructose 1-phosphate + H2O = D-fructose + phosphate. The catalysed reaction is glycerol 2-phosphate + H2O = glycerol + phosphate. The enzyme catalyses adenosine 2'-phosphate + H2O = adenosine + phosphate. Its pathway is polyol metabolism; myo-inositol biosynthesis; myo-inositol from D-glucose 6-phosphate: step 2/2. Inhibited by Li(+), Ca(2+) and Mn(2+), but also by Mg(2+) at concentrations above 3 mM. Its function is as follows. Phosphatase involved in the dephosphorylation of myo-inositol monophosphate to generate myo-inositol. Is also able to dephosphorylate scyllo-inositol-phosphate, myo-inositol 1,4-diphosphate, scyllo-inositol-1,3-diphosphate and scyllo-inositol-1,4-diphosphate. Also dephosphorylates in vitro other sugar-phosphates including D-galactose-1-phosphate, glucose-1-phosphate, glucose-6-phosphate, fructose-1-phosphate, beta-glycerophosphate and 2'-AMP. Responsible for the provision of inositol required for synthesis of phosphatidylinositol and polyphosphoinositides, and involved in maintaining normal brain function. Has been implicated as the pharmacological target for lithium Li(+) action in brain. This is Inositol monophosphatase 1 (Impa1) from Mus musculus (Mouse).